Consider the following 101-residue polypeptide: Small ribosomal subunit protein uS10 (101 aa).

Belongs to the universal ribosomal protein uS10 family. As to quaternary structure, part of the 30S ribosomal subunit.

Functionally, involved in the binding of tRNA to the ribosomes. In Mycobacterium avium (strain 104), this protein is Small ribosomal subunit protein uS10.